Here is a 98-residue protein sequence, read N- to C-terminus: NADH-ubiquinone oxidoreductase chain 4L (98 aa).

Helical transmembrane passes span 1–21, 29–49, and 61–81; these read MSLV…GLLM, SLLC…IMIL, and IILL…LVMV.

It belongs to the complex I subunit 4L family. Core subunit of respiratory chain NADH dehydrogenase (Complex I) which is composed of 45 different subunits.

The protein resides in the mitochondrion inner membrane. The enzyme catalyses a ubiquinone + NADH + 5 H(+)(in) = a ubiquinol + NAD(+) + 4 H(+)(out). Its function is as follows. Core subunit of the mitochondrial membrane respiratory chain NADH dehydrogenase (Complex I) which catalyzes electron transfer from NADH through the respiratory chain, using ubiquinone as an electron acceptor. Part of the enzyme membrane arm which is embedded in the lipid bilayer and involved in proton translocation. This is NADH-ubiquinone oxidoreductase chain 4L (MT-ND4L) from Urotrichus talpoides (Japanese shrew mole).